A 176-amino-acid chain; its full sequence is Ribosome rescue factor SmrB (176 aa).

The Smr domain maps to 93 to 168; the sequence is LDLHGYRQSE…GDAALLVLID (76 aa).

The protein belongs to the SmrB family. As to quaternary structure, associates with collided ribosomes, but not with correctly translating polysomes.

Its function is as follows. Acts as a ribosome collision sensor. Detects stalled/collided disomes (pairs of ribosomes where the leading ribosome is stalled and a second ribosome has collided with it) and endonucleolytically cleaves mRNA at the 5' boundary of the stalled ribosome. Stalled/collided disomes form a new interface (primarily via the 30S subunits) that binds SmrB. Cleaved mRNA becomes available for tmRNA ligation, leading to ribosomal subunit dissociation and rescue of stalled ribosomes. The polypeptide is Ribosome rescue factor SmrB (Shewanella baltica (strain OS195)).